A 127-amino-acid polypeptide reads, in one-letter code: Small ribosomal subunit protein eS8 (127 aa).

This sequence belongs to the eukaryotic ribosomal protein eS8 family. In terms of assembly, part of the 30S ribosomal subunit.

The chain is Small ribosomal subunit protein eS8 from Nanoarchaeum equitans (strain Kin4-M).